Reading from the N-terminus, the 549-residue chain is Glucose-6-phosphate isomerase (549 aa).

K80, K228, and K234 each carry N6-acetyllysine. The active-site Proton donor is the E355. Residues H386 and K514 contribute to the active site.

The protein belongs to the GPI family.

Its subcellular location is the cytoplasm. It catalyses the reaction alpha-D-glucose 6-phosphate = beta-D-fructose 6-phosphate. It functions in the pathway carbohydrate biosynthesis; gluconeogenesis. The protein operates within carbohydrate degradation; glycolysis; D-glyceraldehyde 3-phosphate and glycerone phosphate from D-glucose: step 2/4. Functionally, catalyzes the reversible isomerization of glucose-6-phosphate to fructose-6-phosphate. The chain is Glucose-6-phosphate isomerase from Shigella flexneri serotype 5b (strain 8401).